Reading from the N-terminus, the 139-residue chain is Putative nickel-responsive regulator (139 aa).

Residues His-79, His-90, His-92, and Cys-98 each contribute to the Ni(2+) site.

Belongs to the transcriptional regulatory CopG/NikR family. Ni(2+) serves as cofactor.

Transcriptional regulator. This Anaeromyxobacter sp. (strain K) protein is Putative nickel-responsive regulator.